Reading from the N-terminus, the 159-residue chain is MAIQIILNFILAFIWIFLSGSYTLNNLLLGFILGLGFVYLFSRILPGRFYFIKIYKILKLAVVFFVELLKANIDVLKIVLQPKLKNEPGFFVYHTDLKTDWQIVLLSNLITLTPGTVVLGISDDRKKIYIHSIDFSTKEEEVEGIKSSLEKVVREVGED.

Transmembrane regions (helical) follow at residues 1-21, 27-47, 49-69, and 101-121; these read MAIQ…LSGS, LLLG…ILPG, FYFI…VELL, and WQIV…VLGI.

This sequence belongs to the CPA3 antiporters (TC 2.A.63) subunit E family. May form a heterooligomeric complex that consists of seven subunits: mnhA1, mnhB1, mnhC1, mnhD1, mnhE1, mnhF1 and mnhG1.

It localises to the cell membrane. Its function is as follows. Mnh complex is a Na(+)/H(+) antiporter involved in Na(+) excretion. The polypeptide is Na(+)/H(+) antiporter subunit E1 (mnhE1) (Staphylococcus haemolyticus (strain JCSC1435)).